The primary structure comprises 394 residues: S-adenosylmethionine synthase 2 (394 aa).

Glutamate 11 lines the Mg(2+) pocket. Residue histidine 17 coordinates ATP. Glutamate 45 provides a ligand contact to K(+). Residues glutamate 58 and glutamine 101 each contribute to the L-methionine site. Residues 169–171, 237–240, aspartate 248, 254–255, alanine 271, lysine 275, and lysine 279 contribute to the ATP site; these read DGK, SGRF, and RK. Aspartate 248 contributes to the L-methionine binding site. Lysine 279 serves as a coordination point for L-methionine.

It belongs to the AdoMet synthase family. Homotetramer. Requires Mn(2+) as cofactor. The cofactor is Mg(2+). It depends on Co(2+) as a cofactor. K(+) is required as a cofactor.

It localises to the cytoplasm. The enzyme catalyses L-methionine + ATP + H2O = S-adenosyl-L-methionine + phosphate + diphosphate. Its pathway is amino-acid biosynthesis; S-adenosyl-L-methionine biosynthesis; S-adenosyl-L-methionine from L-methionine: step 1/1. Its function is as follows. Catalyzes the formation of S-adenosylmethionine from methionine and ATP. The reaction comprises two steps that are both catalyzed by the same enzyme: formation of S-adenosylmethionine (AdoMet) and triphosphate, and subsequent hydrolysis of the triphosphate. This Oryza sativa subsp. japonica (Rice) protein is S-adenosylmethionine synthase 2 (SAM2).